The following is a 506-amino-acid chain: Protein P7 (506 aa).

RNA-binding stretches follow at residues 128-249 and 325-355; these read ISYL…GKRE and DGSY…FKIS.

The protein belongs to the phytoreovirus protein P7 family.

The protein localises to the virion. It is found in the host cytoplasm. Functionally, probable component of the transcriptional machinery present in the inner capsid. Displays dsRNA binding activity and may play an important role in the sorting of viral RNA and virion assembly. Together with the RNA-directed RNA polymerase P1 and capping enzyme P5, forms an transcriptional complex positioned near the channels situated at each of the five-fold vertices of the core. This chain is Protein P7, found in Alopecurus aequalis (Barnyard grass).